The following is a 256-amino-acid chain: Protein FixA (256 aa).

Belongs to the ETF beta-subunit/FixA family. As to quaternary structure, heterodimer of FixA and FixB.

Its pathway is amine and polyamine metabolism; carnitine metabolism. Functionally, required for anaerobic carnitine reduction. May bring reductant to CaiA. The polypeptide is Protein FixA (Escherichia coli O6:H1 (strain CFT073 / ATCC 700928 / UPEC)).